The sequence spans 1180 residues: MMLLLPFLLGLLGPGSYLFISGDCQEVATVMVKFQVTEEVPSGTVIGKLSQELRVEERRGKAGDAFQILQLPQALPVQMNSEDGLLSTSSRLDREKLCRQEDPCLVSFDVLATGASALIHVEIQVLDINDHQPQFPKDEQELEISESASLHTRIPLDRALDQDTGPNSLYSYSLSPSEHFALDVIVGPDETKHAELVVVKELDRELHSYFDLVLTAYDNGNPPKSGISVVKVNVLDSNDNSPVFAESSLALEIPEDTVPGTLLINLTATDPDQGPNGEVEFFFGKHVSPEVMNTFGIDAKTGQIILRQALDYEKNPAYEVDVQARDLGPNSIPGHCKVLIKVLDVNDNAPSILITWASQTSLVSEDLPRDSFIALVSANDLDSGNNGLVHCWLNQELGHFRLKRTNGNTYMLLTNATLDREQWPIYTLTVFAQDQGPQPLSAEKELQIQVSDVNDNAPVFEKSRYEVSTWENNPPSLHLITLKAHDADLGSNGKVSYRIKDSPVSHLVIIDFETGEVTAQRSLDYEQMAGFEFQVIAEDRGQPQLASSISVWVSLLDANDNAPEVIQPVLSEGKATLSVLVNASTGHLLLPIENPSGMDPAGTGIPPKATHSPWSFLLLTIVARDADSGANGELFYSIQSGNDAHLFFLSPSLGQLFINVTNASSLIGSQWDLGIVVEDQGSPSLQTQVSLKVVFVTSVDHLRDSAHEPGVLSTPALALICLAVLLAIFGLLLALFVSICRTERKDNRAYNCREAESSYRHQPKRPQKHIQKADIHLVPVLRAHENETDEVRPSHKDTSKETLMEAGWDSCLQAPFHLTPTLYRTLRNQGNQGELAESQEVLQDTFNFLFNHPRQRNASRENLNLPESPPAVRQPLLRPLKVPGSPIARATGDQDKEEAPQSPPASSATLRRQRNFNGKVSPRGESGPHQILRSLVRLSVAAFAERNPVEEPAGDSPPVQQISQLLSLLHQGQFQPKPNHRGNKYLAKPGGSSRGTIPDTEGLVGLKPSGQAEPDLEEGPPSPEEDLSVKRLLEEELSSLLDPNTGLALDKLSPPDPAWMARLSLPLTTNYRDNLSSPDATTSEEPRTFQTFGKTVGPGPELSPTGTRLASTFVSEMSSLLEMLLGQHTVPVEAASAALRRLSVCGRTLSLDLATSGASASEAQGRKKAAESRLGCGRNL.

An N-terminal signal peptide occupies residues 1-17 (MMLLLPFLLGLLGPGSY). The Extracellular portion of the chain corresponds to 18 to 716 (LFISGDCQEV…HEPGVLSTPA (699 aa)). 5 consecutive Cadherin domains span residues 28–135 (ATVM…QPQF), 136–244 (PKDE…SPVF), 245–352 (AESS…APSI), 355–460 (TWAS…APVF), and 461–565 (EKSR…APEV). N-linked (GlcNAc...) asparagine glycans are attached at residues Asn-265 and Asn-415. N-linked (GlcNAc...) asparagine glycans are attached at residues Asn-582, Asn-659, and Asn-662. Residues 600–711 (PAGTGIPPKA…LRDSAHEPGV (112 aa)) enclose the Cadherin 6 domain. The helical transmembrane segment at 717–737 (LALICLAVLLAIFGLLLALFV) threads the bilayer. The Cytoplasmic portion of the chain corresponds to 738-1180 (SICRTERKDN…ESRLGCGRNL (443 aa)). Disordered stretches follow at residues 857–930 (NASR…GPHQ) and 973–1026 (QFQP…PEED). Ser-859 carries the phosphoserine modification. Positions 904 to 918 (PASSATLRRQRNFNG) are enriched in polar residues. Residues 1014–1026 (PDLEEGPPSPEED) show a composition bias toward acidic residues. Ser-1064 bears the Phosphoserine mark. The span at 1076–1093 (SSPDATTSEEPRTFQTFG) shows a compositional bias: polar residues. Disordered regions lie at residues 1076–1104 (SSPD…ELSP) and 1156–1180 (SGAS…GRNL).

Post-translationally, N-glycosylated. In terms of processing, cleaved by ADAM10 close to the transmembrane domain to release the Protocadherin-12, secreted form in the serum. Cleavage results in reduced cellular adhesion in a cell migration assay. In terms of tissue distribution, expressed in endothelial cells: localizes in vasculogenic rather than angiogenic endothelium. Strongly expressed in a subset of invasive cells of the placenta, named glycogen-rich trophoblasts cells (at protein level). glycogen-rich trophoblasts cells originate from the from the ectoplacental cone where they rapidly form tight islets (at protein level). In adult mice, present at high level in mesangial cells of kidney glomeruli, while expression was not detected in other types of perivascular cells.

It is found in the cell membrane. It localises to the cell junction. Its subcellular location is the secreted. Its function is as follows. Cellular adhesion molecule that may play an important role in cell-cell interactions at interendothelial junctions. Acts as a regulator of cell migration, probably via increasing cell-cell adhesion. Promotes homotypic calcium-dependent aggregation and adhesion and clusters at intercellular junctions. Unable to bind to catenins, weakly associates with the cytoskeleton. The protein is Protocadherin-12 of Mus musculus (Mouse).